The primary structure comprises 132 residues: 3-aminoacrylate deaminase RutC (132 aa).

It belongs to the RutC family.

The enzyme catalyses (Z)-3-aminoacrylate + H2O + H(+) = 3-oxopropanoate + NH4(+). Its function is as follows. Involved in pyrimidine catabolism. Catalyzes the deamination of 3-aminoacrylate to malonic semialdehyde, a reaction that can also occur spontaneously. RutC may facilitate the reaction and modulate the metabolic fitness, rather than catalyzing essential functions. The protein is 3-aminoacrylate deaminase RutC of Cronobacter sakazakii (strain ATCC BAA-894) (Enterobacter sakazakii).